A 212-amino-acid polypeptide reads, in one-letter code: Thiamine-phosphate synthase (212 aa).

4-amino-2-methyl-5-(diphosphooxymethyl)pyrimidine is bound by residues 41 to 45 and Asp-76; that span reads QYREK. Asp-77 and Asp-96 together coordinate Mg(2+). 4-amino-2-methyl-5-(diphosphooxymethyl)pyrimidine is bound at residue Ser-114. 141–143 contacts 2-[(2R,5Z)-2-carboxy-4-methylthiazol-5(2H)-ylidene]ethyl phosphate; the sequence is TTS. Residue Lys-144 coordinates 4-amino-2-methyl-5-(diphosphooxymethyl)pyrimidine. Residues Gly-172 and 192–193 contribute to the 2-[(2R,5Z)-2-carboxy-4-methylthiazol-5(2H)-ylidene]ethyl phosphate site; that span reads IS.

It belongs to the thiamine-phosphate synthase family. It depends on Mg(2+) as a cofactor.

The enzyme catalyses 2-[(2R,5Z)-2-carboxy-4-methylthiazol-5(2H)-ylidene]ethyl phosphate + 4-amino-2-methyl-5-(diphosphooxymethyl)pyrimidine + 2 H(+) = thiamine phosphate + CO2 + diphosphate. It catalyses the reaction 2-(2-carboxy-4-methylthiazol-5-yl)ethyl phosphate + 4-amino-2-methyl-5-(diphosphooxymethyl)pyrimidine + 2 H(+) = thiamine phosphate + CO2 + diphosphate. The catalysed reaction is 4-methyl-5-(2-phosphooxyethyl)-thiazole + 4-amino-2-methyl-5-(diphosphooxymethyl)pyrimidine + H(+) = thiamine phosphate + diphosphate. It participates in cofactor biosynthesis; thiamine diphosphate biosynthesis; thiamine phosphate from 4-amino-2-methyl-5-diphosphomethylpyrimidine and 4-methyl-5-(2-phosphoethyl)-thiazole: step 1/1. In terms of biological role, condenses 4-methyl-5-(beta-hydroxyethyl)thiazole monophosphate (THZ-P) and 2-methyl-4-amino-5-hydroxymethyl pyrimidine pyrophosphate (HMP-PP) to form thiamine monophosphate (TMP). This is Thiamine-phosphate synthase from Leuconostoc citreum (strain KM20).